The sequence spans 481 residues: 3-isopropylmalate dehydratase large subunit (481 aa).

Residues Cys-363, Cys-423, and Cys-426 each coordinate [4Fe-4S] cluster. The disordered stretch occupies residues 437–463 (GQRAASTSNRNFEGRQGRGGRTHLVSP).

Belongs to the aconitase/IPM isomerase family. LeuC type 1 subfamily. In terms of assembly, heterodimer of LeuC and LeuD. It depends on [4Fe-4S] cluster as a cofactor.

It catalyses the reaction (2R,3S)-3-isopropylmalate = (2S)-2-isopropylmalate. Its pathway is amino-acid biosynthesis; L-leucine biosynthesis; L-leucine from 3-methyl-2-oxobutanoate: step 2/4. Its function is as follows. Catalyzes the isomerization between 2-isopropylmalate and 3-isopropylmalate, via the formation of 2-isopropylmaleate. In Salinispora arenicola (strain CNS-205), this protein is 3-isopropylmalate dehydratase large subunit.